Consider the following 550-residue polypeptide: Alkaline phosphatase PhoV (550 aa).

The signal sequence occupies residues 1–20 (MKIKLLCISLAVLFCSSANA). Aspartate 48 and threonine 89 together coordinate Zn(2+). Catalysis depends on threonine 89, which acts as the Phosphothreonine intermediate. Substrate is bound by residues asparagine 110 and 171-173 (KDR). Zn(2+)-binding residues include aspartate 313, histidine 317, aspartate 360, histidine 361, and histidine 491.

Requires Zn(2+) as cofactor.

It localises to the cell inner membrane. The enzyme catalyses a phosphate monoester + H2O = an alcohol + phosphate. With respect to regulation, subject to competitive inhibition by phosphate. Inhibited by manganese. Magnesium mildly increases enzyme activity when the zinc concentration is suboptimal. Optimal activity is dependent on the presence of 0.01-2% Triton X-100. Triton X-100 at a concentration of 0.05% increases the activity about fivefold relative to that in its absence. The enzyme is even active in Triton X-100 concentrations up to 80%. 50% inhibition by 4 mM EDTA and 50% inhibition by 48 mM sodium citrate. Its function is as follows. Alkaline phosphatase with broad substrate specificity. The protein is Alkaline phosphatase PhoV of Synechococcus elongatus (strain ATCC 33912 / PCC 7942 / FACHB-805) (Anacystis nidulans R2).